Here is a 97-residue protein sequence, read N- to C-terminus: Glutamyl-tRNA(Gln) amidotransferase subunit C 2 (97 aa).

Belongs to the GatC family. In terms of assembly, heterotrimer of A, B and C subunits.

It carries out the reaction L-glutamyl-tRNA(Gln) + L-glutamine + ATP + H2O = L-glutaminyl-tRNA(Gln) + L-glutamate + ADP + phosphate + H(+). The catalysed reaction is L-aspartyl-tRNA(Asn) + L-glutamine + ATP + H2O = L-asparaginyl-tRNA(Asn) + L-glutamate + ADP + phosphate + 2 H(+). Allows the formation of correctly charged Asn-tRNA(Asn) or Gln-tRNA(Gln) through the transamidation of misacylated Asp-tRNA(Asn) or Glu-tRNA(Gln) in organisms which lack either or both of asparaginyl-tRNA or glutaminyl-tRNA synthetases. The reaction takes place in the presence of glutamine and ATP through an activated phospho-Asp-tRNA(Asn) or phospho-Glu-tRNA(Gln). This Clostridium acetobutylicum (strain ATCC 824 / DSM 792 / JCM 1419 / IAM 19013 / LMG 5710 / NBRC 13948 / NRRL B-527 / VKM B-1787 / 2291 / W) protein is Glutamyl-tRNA(Gln) amidotransferase subunit C 2 (gatC2).